A 101-amino-acid polypeptide reads, in one-letter code: MISIIIAYSTPEKQVEIPLTVEESCTLVVAVKRSGILQQFPEINLSQAIVGIHNKRTALDAGLRDGDRIEIYRPLTMDPKQARLLRAKRGKIRRMVRGEAG.

This sequence belongs to the UPF0125 (RnfH) family.

This is Protein RnfH from Coxiella burnetii (strain CbuK_Q154) (Coxiella burnetii (strain Q154)).